A 353-amino-acid polypeptide reads, in one-letter code: Beta-agarase B (353 aa).

A signal peptide spans 1–17; that stretch reads MYLIYLRLVFCCALLLG. Residue Cys18 is the site of N-palmitoyl cysteine attachment. Cys18 carries the S-diacylglycerol cysteine lipid modification. The disordered stretch occupies residues 30-58; that stretch reads LPVEQEQEQETEQEGEPEESSEQDLVEEV. The span at 32–58 shows a compositional bias: acidic residues; it reads VEQEQEQETEQEGEPEESSEQDLVEEV. The GH16 domain occupies 58–353; sequence VDWKDIPVPA…WIRIYKPVEK (296 aa). Substrate is bound by residues 105–107 and Asp181; that span reads YHN. Glu184 acts as the Nucleophile in catalysis. The active-site Proton donor is Glu189. The substrate site is built by His215, Arg219, Asp224, Gln226, and Glu308.

It belongs to the glycosyl hydrolase 16 family. Homodimer.

It is found in the cell outer membrane. It catalyses the reaction Hydrolysis of (1-&gt;4)-beta-D-galactosidic linkages in agarose, giving the tetramer as the predominant product.. Cleaves the beta-1,4-linkages between beta-D-galactose and alpha-L-3,6-anhydro-galactose residues in agarose. Cleaves agarose in a random manner with retention of the anomeric-bond configuration, producing beta-anomers that give rise progressively to alpha-anomers when mutarotation takes place. Also tolerant to hybrid substrates containing C6-sulfate groups at the -4, +1, and +3 positions. The polypeptide is Beta-agarase B (agaB) (Zobellia galactanivorans (strain DSM 12802 / CCUG 47099 / CIP 106680 / NCIMB 13871 / Dsij)).